The sequence spans 713 residues: Endopolyphosphatase (713 aa).

The Cytoplasmic portion of the chain corresponds to 1–19 (MSVLIDEKSHRSSGSTRSR). Residues 20-40 (IVVTVVGVLLMVSGLAVMLGH) traverse the membrane as a helical; Signal-anchor for type II membrane protein segment. At 41 to 713 (QSGSANEALG…SSEYENMGMG (673 aa)) the chain is on the vacuolar side. A compositionally biased stretch (acidic residues) spans 399-418 (SDDDDNSDSDSDDDDEDTSL). Positions 399 to 430 (SDDDDNSDSDSDDDDEDTSLEESYSNFNSPIL) are disordered. Residues Asn507 and Asn645 are each glycosylated (N-linked (GlcNAc...) asparagine). A compositionally biased stretch (basic residues) spans 640–659 (VKEKKNKSNKKSKKKKKNKD). Residues 640 to 684 (VKEKKNKSNKKSKKKKKNKDKRLLENSEPLKQDGSKDSRLEQDRV) are disordered. The span at 660 to 683 (KRLLENSEPLKQDGSKDSRLEQDR) shows a compositional bias: basic and acidic residues.

The protein belongs to the endopolyphosphatase PPN1 family. Requires a divalent metal cation as cofactor. Post-translationally, processing by proteases in the vacuole may be required for activation.

Its subcellular location is the vacuole membrane. It catalyses the reaction [phosphate](n+1) + n H2O = (n+1) phosphate + n H(+). Functionally, catalyzes the hydrolysis of inorganic polyphosphate (polyP) chains of many hundreds of phosphate residues into shorter lengths. In Debaryomyces hansenii (strain ATCC 36239 / CBS 767 / BCRC 21394 / JCM 1990 / NBRC 0083 / IGC 2968) (Yeast), this protein is Endopolyphosphatase (PPN1).